We begin with the raw amino-acid sequence, 269 residues long: Cytolethal distending toxin subunit B (269 aa).

A signal peptide spans methionine 1 to alanine 18. A Nuclear localization signal motif is present at residues arginine 195–arginine 210.

As to quaternary structure, heterotrimer of 3 subunits, CdtA, CdtB and CdtC.

It localises to the secreted. Functionally, part of the tripartite complex that is required for the CDT activity. CdtB exhibits a DNA-nicking endonuclease activity, and very probably causes DNA damage in intoxicated cells. This damage induces G2/M cell cycle arrest, chromatin fragmentation, cell distention and nucleus enlargement. This chain is Cytolethal distending toxin subunit B (cdtB), found in Escherichia coli.